Reading from the N-terminus, the 301-residue chain is Large ribosomal subunit protein uL4 (301 aa).

Positions 1–223 (MNETKTIDVL…TQALSAQPEV (223 aa)) are large ribosomal subunit protein uL4. The disordered stretch occupies residues 49–105 (QGTHATKTRGQVSGGGKKPWRQKGTGRARQGSTRAPQWVGGGTVHGPQPRSYAQRTP). Residues 224 to 301 (PETNVADQHP…KSDSEKEDAK (78 aa)) are unknown.

It belongs to the universal ribosomal protein uL4 family. Part of the 50S ribosomal subunit.

Its function is as follows. One of the primary rRNA binding proteins, this protein initially binds near the 5'-end of the 23S rRNA. It is important during the early stages of 50S assembly. It makes multiple contacts with different domains of the 23S rRNA in the assembled 50S subunit and ribosome. Functionally, forms part of the polypeptide exit tunnel. This is Large ribosomal subunit protein uL4 from Cutibacterium acnes (strain DSM 16379 / KPA171202) (Propionibacterium acnes).